Reading from the N-terminus, the 143-residue chain is MTKTIPKIGSRKKVRIGLRRNARFSLRKSARRITKGVIHVQASFNNTIITVTDPQGRVVFWSSAGTCGFKSSRKASPYAGQRTAVDAIRTVGLQRAEVMVKGAGSGRDAALRAIAKSGVRLSCIRDVTPMPHNGCRPPKKRRL.

Belongs to the universal ribosomal protein uS11 family. Part of the 30S ribosomal subunit.

It localises to the plastid. Its subcellular location is the chloroplast. The protein is Small ribosomal subunit protein uS11c of Cenchrus americanus (Pearl millet).